Reading from the N-terminus, the 109-residue chain is Spermidine export protein MdtI (109 aa).

4 helical membrane passes run 6-26 (WVHAAWLALAIVLEIVANVFL), 36-56 (IFGLLSQAAVLAAFSALSQAV), 64-84 (AYALWGGFGIAATLAAGWILF), and 88-108 (LNRKGWIGLVLLLAGMIMVKL).

The protein belongs to the drug/metabolite transporter (DMT) superfamily. Small multidrug resistance (SMR) (TC 2.A.7.1) family. MdtI subfamily. Forms a complex with MdtJ.

The protein resides in the cell inner membrane. Its function is as follows. Catalyzes the excretion of spermidine. In Shigella dysenteriae serotype 1 (strain Sd197), this protein is Spermidine export protein MdtI.